We begin with the raw amino-acid sequence, 204 residues long: Dual-action ribosomal maturation protein DarP (204 aa).

2 disordered regions span residues Met1–Gln31 and Gly182–Ala204. The segment covering Asp186 to Ala204 has biased composition (acidic residues).

Belongs to the DarP family.

It localises to the cytoplasm. In terms of biological role, member of a network of 50S ribosomal subunit biogenesis factors which assembles along the 30S-50S interface, preventing incorrect 23S rRNA structures from forming. Promotes peptidyl transferase center (PTC) maturation. In Burkholderia orbicola (strain MC0-3), this protein is Dual-action ribosomal maturation protein DarP.